A 111-amino-acid polypeptide reads, in one-letter code: uncharacterized protein (111 aa).

A signal peptide spans 1–18; that stretch reads MGKSMEEGIFVKVFPSKA.

This is an uncharacterized protein from Acidianus convivator (ATV).